We begin with the raw amino-acid sequence, 325 residues long: NADH-quinone oxidoreductase subunit H (325 aa).

8 helical membrane-spanning segments follow: residues 11 to 31, 81 to 101, 114 to 134, 154 to 174, 186 to 206, 237 to 257, 265 to 285, and 304 to 324; these read ILISVLKAVVILLVVVTCGAF, AIFTLAPVIAFTSLLLSFAIV, IGILFFLMMAGLAVYAVLFAG, LSYEVFLGLSLMGVVAQAGSF, VWNVIPQFFGFVTFAIAGVAV, FFVGEYIGIVTVSALIVTLFF, LPPFIWFALKTAFFMVMFILI, and VCLPLTLLNLLATAAVILYNA.

It belongs to the complex I subunit 1 family. NDH-1 is composed of 13 different subunits. Subunits NuoA, H, J, K, L, M, N constitute the membrane sector of the complex.

The protein localises to the cell inner membrane. It carries out the reaction a quinone + NADH + 5 H(+)(in) = a quinol + NAD(+) + 4 H(+)(out). Its function is as follows. NDH-1 shuttles electrons from NADH, via FMN and iron-sulfur (Fe-S) centers, to quinones in the respiratory chain. The immediate electron acceptor for the enzyme in this species is believed to be ubiquinone. Couples the redox reaction to proton translocation (for every two electrons transferred, four hydrogen ions are translocated across the cytoplasmic membrane), and thus conserves the redox energy in a proton gradient. This subunit may bind ubiquinone. The protein is NADH-quinone oxidoreductase subunit H of Yersinia enterocolitica serotype O:8 / biotype 1B (strain NCTC 13174 / 8081).